The chain runs to 405 residues: DNA primase DnaG (405 aa).

Residues 172–248 form the Toprim domain; that stretch reads DSIIVVEGRA…HIDYIARAPP (77 aa). 3 residues coordinate Mg(2+): Glu178, Asp222, and Asp224. The interval 279-302 is disordered; the sequence is AAGEKTESQMSPQQPQLTQTQPTT. Residues 290 to 302 are compositionally biased toward low complexity; it reads PQQPQLTQTQPTT.

Belongs to the archaeal DnaG primase family. In terms of assembly, forms a ternary complex with MCM helicase and DNA. Component of the archaeal exosome complex. Mg(2+) serves as cofactor.

The enzyme catalyses ssDNA + n NTP = ssDNA/pppN(pN)n-1 hybrid + (n-1) diphosphate.. In terms of biological role, RNA polymerase that catalyzes the synthesis of short RNA molecules used as primers for DNA polymerase during DNA replication. Also part of the exosome, which is a complex involved in RNA degradation. Acts as a poly(A)-binding protein that enhances the interaction between heteromeric, adenine-rich transcripts and the exosome. The polypeptide is DNA primase DnaG (Pyrobaculum islandicum (strain DSM 4184 / JCM 9189 / GEO3)).